The following is a 309-amino-acid chain: 2-phospho-L-lactate transferase (309 aa).

7,8-didemethyl-8-hydroxy-5-deazariboflavin contacts are provided by Asp-50 and Lys-89.

Belongs to the CofD family. In terms of assembly, homodimer. Requires Mg(2+) as cofactor.

The catalysed reaction is (2S)-lactyl-2-diphospho-5'-guanosine + 7,8-didemethyl-8-hydroxy-5-deazariboflavin = oxidized coenzyme F420-0 + GMP + H(+). Its pathway is cofactor biosynthesis; coenzyme F420 biosynthesis. Functionally, catalyzes the transfer of the 2-phospholactate moiety from (2S)-lactyl-2-diphospho-5'-guanosine to 7,8-didemethyl-8-hydroxy-5-deazariboflavin (FO) with the formation of oxidized coenzyme F420-0 and GMP. The chain is 2-phospho-L-lactate transferase from Methanococcus maripaludis (strain C7 / ATCC BAA-1331).